A 484-amino-acid polypeptide reads, in one-letter code: Aldehyde dehydrogenase family 3 member A2 (484 aa).

The Cytoplasmic segment spans residues 1-463; the sequence is MERQVLRLRQ…FLLKQFNKGR (463 aa). Position 185–190 (185–190) interacts with NAD(+); it reads GNTAVG. Catalysis depends on residues Glu207 and Cys241. At Ser293 the chain carries Phosphoserine. A helical membrane pass occupies residues 464–484; sequence LGMLLFVCLVAVAAVIVKDQL. The Prevents secretion from ER signature appears at 481–484; it reads KDQL.

It belongs to the aldehyde dehydrogenase family. As to quaternary structure, homodimer.

Its subcellular location is the membrane. The protein localises to the microsome membrane. It is found in the endoplasmic reticulum membrane. The catalysed reaction is an aldehyde + NAD(+) + H2O = a carboxylate + NADH + 2 H(+). The enzyme catalyses a fatty aldehyde + NAD(+) + H2O = a fatty acid + NADH + 2 H(+). It carries out the reaction hexadecanoate + NADH + 2 H(+) = hexadecanal + NAD(+) + H2O. It catalyses the reaction octanal + NAD(+) + H2O = octanoate + NADH + 2 H(+). The catalysed reaction is (2E)-hexadecenal + NAD(+) + H2O = (E)-hexadec-2-enoate + NADH + 2 H(+). The enzyme catalyses 22-oxodocosanoate + NAD(+) + H2O = docosanedioate + NADH + 2 H(+). It carries out the reaction 2,6,10,14-tetramethylpentadecanal + NAD(+) + H2O = 2,6,10,14-tetramethylpentadecanoate + NADH + 2 H(+). It catalyses the reaction octadecanal + NAD(+) + H2O = octadecanoate + NADH + 2 H(+). The catalysed reaction is dodecanoate + NADH + 2 H(+) = dodecanal + NAD(+) + H2O. The enzyme catalyses decanal + NAD(+) + H2O = decanoate + NADH + 2 H(+). It carries out the reaction tetradecanal + NAD(+) + H2O = tetradecanoate + NADH + 2 H(+). It catalyses the reaction heptanal + NAD(+) + H2O = heptanoate + NADH + 2 H(+). The catalysed reaction is (2E,6E)-farnesal + NAD(+) + H2O = (2E,6E)-farnesoate + NADH + 2 H(+). Functionally, catalyzes the oxidation of medium and long-chain aliphatic aldehydes to fatty acids. Active on a variety of saturated and unsaturated aliphatic aldehydes between 6 and 24 carbons in length. Responsible for conversion of the sphingosine 1-phosphate (S1P) degradation product hexadecenal to hexadecenoic acid. The polypeptide is Aldehyde dehydrogenase family 3 member A2 (Aldh3a2) (Mus musculus (Mouse)).